Consider the following 143-residue polypeptide: Large ribosomal subunit protein uL15 (143 aa).

The tract at residues 1 to 52 is disordered; it reads MELNSIQPADGAKHYKRRVGRGIGSGLGKTSGRGHKGQKSRSGGFHKVGFEG. Positions 21-31 are enriched in gly residues; the sequence is RGIGSGLGKTS.

Belongs to the universal ribosomal protein uL15 family. As to quaternary structure, part of the 50S ribosomal subunit.

Functionally, binds to the 23S rRNA. This Janthinobacterium sp. (strain Marseille) (Minibacterium massiliensis) protein is Large ribosomal subunit protein uL15.